The sequence spans 336 residues: D-alanine--D-alanine ligase (336 aa).

The region spanning 124–330 (KMWFSALGIP…FATFLEQAIL (207 aa)) is the ATP-grasp domain. 154–209 (AFDEWGSVFIKAASQGSSVGCFPAHRREDIPGLVRKAFEYAPFVVVEKTIKARELE) lines the ATP pocket. 3 residues coordinate Mg(2+): Asp-284, Glu-297, and Asn-299.

The protein belongs to the D-alanine--D-alanine ligase family. Mg(2+) serves as cofactor. Requires Mn(2+) as cofactor.

It is found in the cytoplasm. The catalysed reaction is 2 D-alanine + ATP = D-alanyl-D-alanine + ADP + phosphate + H(+). The protein operates within cell wall biogenesis; peptidoglycan biosynthesis. In terms of biological role, cell wall formation. The protein is D-alanine--D-alanine ligase of Shewanella amazonensis (strain ATCC BAA-1098 / SB2B).